The chain runs to 296 residues: 4-hydroxy-tetrahydrodipicolinate synthase (296 aa).

Residue Thr-49 participates in pyruvate binding. Residue Tyr-137 is the Proton donor/acceptor of the active site. Residue Lys-165 is the Schiff-base intermediate with substrate of the active site. A pyruvate-binding site is contributed by Ile-207.

This sequence belongs to the DapA family. Homotetramer; dimer of dimers.

Its subcellular location is the cytoplasm. It carries out the reaction L-aspartate 4-semialdehyde + pyruvate = (2S,4S)-4-hydroxy-2,3,4,5-tetrahydrodipicolinate + H2O + H(+). It participates in amino-acid biosynthesis; L-lysine biosynthesis via DAP pathway; (S)-tetrahydrodipicolinate from L-aspartate: step 3/4. Functionally, catalyzes the condensation of (S)-aspartate-beta-semialdehyde [(S)-ASA] and pyruvate to 4-hydroxy-tetrahydrodipicolinate (HTPA). The protein is 4-hydroxy-tetrahydrodipicolinate synthase of Afipia carboxidovorans (strain ATCC 49405 / DSM 1227 / KCTC 32145 / OM5) (Oligotropha carboxidovorans).